We begin with the raw amino-acid sequence, 397 residues long: Subtilisin-like protease 3 (397 aa).

An N-terminal signal peptide occupies residues 1-19; that stretch reads MGCIKVISVFLAAIAAVDA. Positions 20–116 are excised as a propeptide; the sequence is RAFFHNRGGS…VEHDRVVKLA (97 aa). The 82-residue stretch at 35 to 116 folds into the Inhibitor I9 domain; that stretch reads SYIVVMKDGV…VEHDRVVKLA (82 aa). One can recognise a Peptidase S8 domain in the interval 126-397; sequence TWGLGRVSHR…NRLLYNGSGQ (272 aa). Residues aspartate 158 and histidine 189 each act as charge relay system in the active site. The N-linked (GlcNAc...) asparagine glycan is linked to asparagine 250. Residue serine 344 is the Charge relay system of the active site. An N-linked (GlcNAc...) asparagine glycan is attached at asparagine 393.

Belongs to the peptidase S8 family.

Its subcellular location is the secreted. Secreted subtilisin-like serine protease with keratinolytic activity that contributes to pathogenicity. This Trichophyton tonsurans (Scalp ringworm fungus) protein is Subtilisin-like protease 3 (SUB3).